A 47-amino-acid polypeptide reads, in one-letter code: PhoP/PhoQ regulator MgrB (47 aa).

Residues 6–26 (WVLLIVIIAGCLLLWTQMLNV) traverse the membrane as a helical segment.

This sequence belongs to the MgrB family. May form homooligomers. Probably interacts with the periplasmic domain of PhoQ.

Its subcellular location is the cell inner membrane. In terms of biological role, phoP-regulated transcription is redox-sensitive, being activated when the periplasm becomes more reducing. MgrB acts between DsbA/DsbB and PhoP/PhoQ in this pathway. Represses PhoP/PhoQ signaling, possibly by binding to the periplasmic domain of PhoQ, altering its activity and that of downstream effector PhoP. This is PhoP/PhoQ regulator MgrB from Klebsiella pneumoniae (strain 342).